The following is a 338-amino-acid chain: Formamidase (338 aa).

In terms of domain architecture, CN hydrolase spans 14-257 (VGIGLVQLQL…NEIITAEVRP (244 aa)). E60 acts as the Proton acceptor in catalysis. K129 functions as the Proton donor in the catalytic mechanism. The active-site Nucleophile is C162.

It belongs to the carbon-nitrogen hydrolase superfamily. Aliphatic amidase family.

It catalyses the reaction formamide + H2O = formate + NH4(+). Functionally, is an aliphatic amidase with a restricted substrate specificity, as it only hydrolyzes formamide. The polypeptide is Formamidase (Allorhizobium ampelinum (strain ATCC BAA-846 / DSM 112012 / S4) (Agrobacterium vitis (strain S4))).